Reading from the N-terminus, the 296-residue chain is Iron-sulfur cluster carrier protein (296 aa).

Positions 1 to 17 (MSSNPFRIQNPQPQPQR) are enriched in low complexity. The tract at residues 1-23 (MSSNPFRIQNPQPQPQRQPRDLR) is disordered. An ATP-binding site is contributed by 52–59 (GKGGVGKS).

The protein belongs to the Mrp/NBP35 ATP-binding proteins family. Homodimer.

In terms of biological role, binds and transfers iron-sulfur (Fe-S) clusters to target apoproteins. Can hydrolyze ATP. This Saccharolobus solfataricus (strain ATCC 35092 / DSM 1617 / JCM 11322 / P2) (Sulfolobus solfataricus) protein is Iron-sulfur cluster carrier protein.